A 98-amino-acid chain; its full sequence is Phosphoribosyl-ATP pyrophosphatase (98 aa).

The protein belongs to the PRA-PH family.

It is found in the cytoplasm. It catalyses the reaction 1-(5-phospho-beta-D-ribosyl)-ATP + H2O = 1-(5-phospho-beta-D-ribosyl)-5'-AMP + diphosphate + H(+). It participates in amino-acid biosynthesis; L-histidine biosynthesis; L-histidine from 5-phospho-alpha-D-ribose 1-diphosphate: step 2/9. The polypeptide is Phosphoribosyl-ATP pyrophosphatase (Haloarcula marismortui (strain ATCC 43049 / DSM 3752 / JCM 8966 / VKM B-1809) (Halobacterium marismortui)).